We begin with the raw amino-acid sequence, 328 residues long: Ferredoxin--NADP reductase (328 aa).

Residues E36, Q44, Y49, V89, F123, D284, and T324 each coordinate FAD.

The protein belongs to the ferredoxin--NADP reductase type 2 family. As to quaternary structure, homodimer. It depends on FAD as a cofactor.

It catalyses the reaction 2 reduced [2Fe-2S]-[ferredoxin] + NADP(+) + H(+) = 2 oxidized [2Fe-2S]-[ferredoxin] + NADPH. This is Ferredoxin--NADP reductase from Lacticaseibacillus paracasei (strain ATCC 334 / BCRC 17002 / CCUG 31169 / CIP 107868 / KCTC 3260 / NRRL B-441) (Lactobacillus paracasei).